The following is a 196-amino-acid chain: MPIGVPKVPFRSPGEEDAYWVDIYNRLYRERLLFLGQPVASEISNQLIGLMVYLSIEDDTKDLYLFMNSPGGWVLPGIAIYDTMQFVRPDVHTICMGLAASMGSFILAGGEITKRLAFPHARVMIHQPASSFYEAQTGEFVLEAEELLKLRETITRVYVQKTGKPFWVVSEDLERDVFMSATEAQAYGIVDLVAVE.

The active-site Nucleophile is Ser101. Residue His126 is part of the active site.

Belongs to the peptidase S14 family. As to quaternary structure, component of the chloroplastic Clp protease core complex.

The protein localises to the plastid. It localises to the chloroplast stroma. It catalyses the reaction Hydrolysis of proteins to small peptides in the presence of ATP and magnesium. alpha-casein is the usual test substrate. In the absence of ATP, only oligopeptides shorter than five residues are hydrolyzed (such as succinyl-Leu-Tyr-|-NHMec, and Leu-Tyr-Leu-|-Tyr-Trp, in which cleavage of the -Tyr-|-Leu- and -Tyr-|-Trp bonds also occurs).. Functionally, cleaves peptides in various proteins in a process that requires ATP hydrolysis. Has a chymotrypsin-like activity. Plays a major role in the degradation of misfolded proteins. The polypeptide is ATP-dependent Clp protease proteolytic subunit (Panax ginseng (Korean ginseng)).